Consider the following 372-residue polypeptide: Glutamate 5-kinase (372 aa).

Residue Lys-14 participates in ATP binding. The substrate site is built by Ser-54, Asp-141, and Asn-153. ATP is bound by residues 173–174 and 215–221; these read TD and SGGMLTK. A PUA domain is found at 280 to 358; the sequence is AGKVVVDEGA…HEIEHILGYI (79 aa).

The protein belongs to the glutamate 5-kinase family.

The protein localises to the cytoplasm. The enzyme catalyses L-glutamate + ATP = L-glutamyl 5-phosphate + ADP. Its pathway is amino-acid biosynthesis; L-proline biosynthesis; L-glutamate 5-semialdehyde from L-glutamate: step 1/2. In terms of biological role, catalyzes the transfer of a phosphate group to glutamate to form L-glutamate 5-phosphate. The protein is Glutamate 5-kinase of Methylobacillus flagellatus (strain ATCC 51484 / DSM 6875 / VKM B-1610 / KT).